The primary structure comprises 530 residues: Inactive ubiquitin carboxyl-terminal hydrolase 17-like protein 7 (530 aa).

Residues Ala-80 to Lys-375 enclose the USP domain. Over residues Ser-382 to Arg-392 the composition is skewed to basic and acidic residues. Disordered regions lie at residues Ser-382–His-412, Glu-431–Lys-454, and Ser-490–Gln-530. Residues Ser-490 to Thr-512 are compositionally biased toward polar residues. The span at Arg-513 to Arg-524 shows a compositional bias: basic residues.

The protein belongs to the peptidase C19 family. USP17 subfamily.

The protein localises to the nucleus. Its subcellular location is the endoplasmic reticulum. This is Inactive ubiquitin carboxyl-terminal hydrolase 17-like protein 7 (USP17L7) from Homo sapiens (Human).